The sequence spans 20 residues: Dentinal fluid transport-stimulating peptide (20 aa).

The disordered stretch occupies residues 1–20 (GVIAWELQHNEPGRKDSTAG). The span at 8-20 (QHNEPGRKDSTAG) shows a compositional bias: basic and acidic residues.

In terms of biological role, this peptide stimulates the transport of dentinal fluid, which is important for the prevention of dental caries. The sequence is that of Dentinal fluid transport-stimulating peptide from Rattus norvegicus (Rat).